The following is a 250-amino-acid chain: Probable 2' cyclic ADP-D-ribose synthase TcpB (250 aa).

The segment at 1–46 is disordered; the sequence is MSKEKQAQSKAHKAQQAISSAKSLSTQKSKMSELERATRDGAAIGK. A compositionally biased stretch (low complexity) spans 14-23; that stretch reads AQQAISSAKS. Positions 30–39 are enriched in basic and acidic residues; sequence KMSELERATR. The region spanning 117–250 is the TIR domain; sequence EEYDFFISHA…EIAKELHSLI (134 aa). E192 is an active-site residue.

Homodimer. Interacts with host TIRAP. Interacts with host TLR4, abolishes the interaction of host TIRAP with TLR4.

It is found in the secreted. Its subcellular location is the host cell membrane. It catalyses the reaction NAD(+) + H2O = ADP-D-ribose + nicotinamide + H(+). It carries out the reaction NAD(+) = 2'cADPR + nicotinamide + H(+). In terms of biological role, virulence factor that interferes with host Toll-like receptor 2 (TLR2) signaling, resulting in the reduction of dendritic cell maturation, inhibition of pro-inflammatory cytokine secretion and impaired NF-kappa-B activation in macrophages. Also acts on host TLR4. Binds host lipids. Has NAD(+) hydrolase (NADase) activity, catalyzes cleavage of NAD(+) into ADP-D-ribose (ADPR) and nicotinamide, also generates a cyclization variant of cyclic ADPR (cADPR), termed v-cADPR (probably 2'cADPR). The sequence is that of Probable 2' cyclic ADP-D-ribose synthase TcpB from Brucella abortus (strain 2308).